The following is a 450-amino-acid chain: E3 ubiquitin-protein ligase XB3 (450 aa).

ANK repeat units follow at residues 11–40 (GDEHDFFRAAQLGDLDALAALLAADPSLAR), 46–75 (DRLSVLHIAAANGRIEVLSMFLDRGAPPDA), 79–108 (HKQTPLMLAAMHGKIDCVLKLLQADANILM), 113–142 (HARTCLHHAAYYGHVDCLQAILAAAQTTPV), 158–187 (HGATPLHLAARQGRPGCVQVLLENGAIVSA), and 195–225 (PGSTSLHLAARSGNLDCIRKLLAWGADRLQR). Positions 291 to 312 (ILNGTKYSLPSPSPGDDSADDD) are disordered. The segment at 323–372 (CCICFDQACTIEVQDCGHQMCAPCTLALCCHNKPNPTTLTPPSPACPFCR) adopts an RING-type zinc-finger fold. Residues 385–450 (SACDPDKPSS…SNLDKPEHDL (66 aa)) form a disordered region.

As to quaternary structure, interacts (via ankyrin repeats) with XA21. Post-translationally, phosphorylated by XA21.

The catalysed reaction is S-ubiquitinyl-[E2 ubiquitin-conjugating enzyme]-L-cysteine + [acceptor protein]-L-lysine = [E2 ubiquitin-conjugating enzyme]-L-cysteine + N(6)-ubiquitinyl-[acceptor protein]-L-lysine.. The protein operates within protein modification; protein ubiquitination. Functionally, E3 ubiquitin-protein ligase required for full accumulation of the LRR receptor kinase XA21 and XA21-mediated disease resistance. Binding to XA21 may stabilize the receptor kinase and maintain its protein level. Autoubiquitinated in vitro. This Oryza sativa subsp. japonica (Rice) protein is E3 ubiquitin-protein ligase XB3 (XB3).